A 452-amino-acid chain; its full sequence is Phosphatidate cytidylyltransferase, mitochondrial (452 aa).

The protein belongs to the TAM41 family. Mg(2+) serves as cofactor.

It is found in the mitochondrion inner membrane. The catalysed reaction is a 1,2-diacyl-sn-glycero-3-phosphate + CTP + H(+) = a CDP-1,2-diacyl-sn-glycerol + diphosphate. It functions in the pathway phospholipid metabolism; CDP-diacylglycerol biosynthesis; CDP-diacylglycerol from sn-glycerol 3-phosphate: step 3/3. Functionally, catalyzes the conversion of phosphatidic acid (PA) to CDP-diacylglycerol (CDP-DAG), an essential intermediate in the synthesis of phosphatidylglycerol, cardiolipin and phosphatidylinositol. This chain is Phosphatidate cytidylyltransferase, mitochondrial (TAMM41), found in Homo sapiens (Human).